Consider the following 300-residue polypeptide: Cytochrome b (300 aa).

The next 6 helical transmembrane spans lie at 28–48 (YGFL…LLAL), 72–94 (WCFR…LHIL), 107–127 (SWIS…YGYV), 168–187 (FFVF…FGIL), 223–243 (IPNK…LFLL), and 279–299 (IGCQ…YIIL). Positions 78 and 92 each coordinate heme b.

The protein belongs to the cytochrome b family. The main subunits of complex b-c1 are: cytochrome b, cytochrome c1 and the Rieske protein. It depends on heme b as a cofactor.

Its subcellular location is the mitochondrion inner membrane. Functionally, component of the ubiquinol-cytochrome c reductase complex (complex III or cytochrome b-c1 complex) that is part of the mitochondrial respiratory chain. The b-c1 complex mediates electron transfer from ubiquinol to cytochrome c. Contributes to the generation of a proton gradient across the mitochondrial membrane that is then used for ATP synthesis. The protein is Cytochrome b (MT-CYB) of Plasmodium gallinaceum.